Here is a 382-residue protein sequence, read N- to C-terminus: Dual-specificity RNA methyltransferase RlmN (382 aa).

Glu95 acts as the Proton acceptor in catalysis. Residues 101-348 (EDDRGTLCIS…TTVRKTRGDD (248 aa)) enclose the Radical SAM core domain. A disulfide bridge links Cys108 with Cys353. The [4Fe-4S] cluster site is built by Cys115, Cys119, and Cys122. S-adenosyl-L-methionine-binding positions include 179–180 (GE), Ser211, 233–235 (SLH), and Asn310. Residue Cys353 is the S-methylcysteine intermediate of the active site.

Belongs to the radical SAM superfamily. RlmN family. It depends on [4Fe-4S] cluster as a cofactor.

The protein localises to the cytoplasm. It catalyses the reaction adenosine(2503) in 23S rRNA + 2 reduced [2Fe-2S]-[ferredoxin] + 2 S-adenosyl-L-methionine = 2-methyladenosine(2503) in 23S rRNA + 5'-deoxyadenosine + L-methionine + 2 oxidized [2Fe-2S]-[ferredoxin] + S-adenosyl-L-homocysteine. The enzyme catalyses adenosine(37) in tRNA + 2 reduced [2Fe-2S]-[ferredoxin] + 2 S-adenosyl-L-methionine = 2-methyladenosine(37) in tRNA + 5'-deoxyadenosine + L-methionine + 2 oxidized [2Fe-2S]-[ferredoxin] + S-adenosyl-L-homocysteine. Functionally, specifically methylates position 2 of adenine 2503 in 23S rRNA and position 2 of adenine 37 in tRNAs. m2A2503 modification seems to play a crucial role in the proofreading step occurring at the peptidyl transferase center and thus would serve to optimize ribosomal fidelity. This is Dual-specificity RNA methyltransferase RlmN from Bordetella pertussis (strain Tohama I / ATCC BAA-589 / NCTC 13251).